A 722-amino-acid polypeptide reads, in one-letter code: Nucleolar protein 10 (722 aa).

WD repeat units follow at residues 50–90 (EMPT…LKFE), 174–213 (TDAAEMNVCDINPVHQLFAAGTLEGRVDCWDPRVRTRVAA), 228–266 (EGLPSVSALKFNDSLGLAVGTSTGQILVYDLRSSRPLLV), 270–308 (YYGLPIKSLHFHNSLDLVLSADSKIIKMWNKDNGKVFSS), and 310–349 (EPQANINDVCLYPASGMLFTANEDPKMNTFYIPALGPAPR). 2 coiled-coil regions span residues 423-476 (EYRK…ANVA) and 511-534 (SNVAERRRKSLLEEEQEQAEEEQE). 4 disordered regions span residues 521–555 (LLEEEQEQAEEEQEPEGRGSSEDDSSDEDDKGWVQ), 572–607 (SYIQRQERRQQDRNTRLQSSDTHTQQSHGAQKPRFY), 616–635 (RSFSDVSRKQKTHKASLEER), and 664–722 (TEKQ…RRPF). Residues 523 to 534 (EEEQEQAEEEQE) show a composition bias toward acidic residues. Residues 572–586 (SYIQRQERRQQDRNT) show a composition bias toward basic and acidic residues. Polar residues predominate over residues 587–600 (RLQSSDTHTQQSHG). Positions 620-681 (DVSRKQKTHK…QAERDHHEER (62 aa)) form a coiled coil. A compositionally biased stretch (basic and acidic residues) spans 664–682 (TEKQRFQQQAERDHHEERR). Composition is skewed to basic residues over residues 683–693 (RIRRSAGHLHS) and 702–722 (GGGRGRGGGRGRGGGRGRRPF).

Belongs to the WD repeat NOL10/ENP2 family.

It is found in the nucleus. Its subcellular location is the nucleolus. The sequence is that of Nucleolar protein 10 (nol10) from Danio rerio (Zebrafish).